Consider the following 231-residue polypeptide: Large ribosomal subunit protein uL1 (231 aa).

The protein belongs to the universal ribosomal protein uL1 family. Part of the 50S ribosomal subunit.

Binds directly to 23S rRNA. The L1 stalk is quite mobile in the ribosome, and is involved in E site tRNA release. Its function is as follows. Protein L1 is also a translational repressor protein, it controls the translation of the L11 operon by binding to its mRNA. The sequence is that of Large ribosomal subunit protein uL1 from Mesomycoplasma hyopneumoniae (strain 232) (Mycoplasma hyopneumoniae).